Reading from the N-terminus, the 170-residue chain is Ureidoglycolate lyase (170 aa).

It belongs to the ureidoglycolate lyase family. In terms of assembly, homodimer. The cofactor is Ni(2+).

It carries out the reaction (S)-ureidoglycolate = urea + glyoxylate. The protein operates within nitrogen metabolism; (S)-allantoin degradation. Catalyzes the catabolism of the allantoin degradation intermediate (S)-ureidoglycolate, generating urea and glyoxylate. Involved in the utilization of allantoin as nitrogen source. The protein is Ureidoglycolate lyase of Burkholderia mallei (strain NCTC 10247).